The chain runs to 450 residues: Bifunctional apoptosis regulator (450 aa).

The interval 1–24 is disordered; that stretch reads MEEPQKNDLSMRGQEEDHPVRSSG. Residues 1-140 are Cytoplasmic-facing; sequence MEEPQKNDLS…PSTGRVNQQR (140 aa). The RING-type zinc finger occupies 34 to 74; it reads CHCCYDTLVNPTTLNCGHSFCRHCLALWWMSSKKTECPECR. Residues 141 to 161 traverse the membrane as a helical segment; that stretch reads GGGFFSGVLTALTGVAVILLV. Residues 162–331 lie on the Extracellular side of the membrane; it reads YHWRSRESEH…REPTWKQWRE (170 aa). The SAM domain maps to 182 to 249; the sequence is WTTEEVVLWL…LMELERVRAL (68 aa). Asn232 carries N-linked (GlcNAc...) asparagine glycosylation. The helical transmembrane segment at 332-352 threads the bilayer; that stretch reads FLIKYSFLPYQLIAEFAWDWL. The Cytoplasmic segment spans residues 353-360; sequence EVHYWTSR. Residues 361–381 form a helical membrane-spanning segment; the sequence is FLIVNAMLLSVLELFSFWRIW. Over 382-404 the chain is Extracellular; the sequence is SRSELKTVPQRMWSHFWKVSTQG. The helical transmembrane segment at 405–425 threads the bilayer; that stretch reads LFMAMFWPLIPQFVCNCLFYW. The Cytoplasmic segment spans residues 426–450; sequence ALYFNPIINIDLVVKEIRRLETQVF.

As to quaternary structure, interacts with CASP8, BCL2 and BCL2L1 through SAM domain and also with HIP1, IFT57, ESRRBL1 and BCAP31. Interacts with NGFR; this interaction inhibits NF-kappa-B and JNK-related signaling pathways. In terms of processing, mediates RING-dependent self-ubiquitination leading to proteasomal degradation.

It is found in the endoplasmic reticulum membrane. The enzyme catalyses S-ubiquitinyl-[E2 ubiquitin-conjugating enzyme]-L-cysteine + [acceptor protein]-L-lysine = [E2 ubiquitin-conjugating enzyme]-L-cysteine + N(6)-ubiquitinyl-[acceptor protein]-L-lysine.. Functionally, membrane-bound E3 ubiquitin ligase that plays a role in several processes including apoptosis regulation or reticulum endoplasmic stress. Has anti-apoptotic activity, both for apoptosis triggered via death-receptors and via mitochondrial factors. Contributes to the dynamic control of IRE1/ERN1 signaling during ER stress by inducing BAX inhibitor 1/TMBIM6 proteasomal degradation. Promotes the activation of TGF-beta signaling by mediating the 'Lys-63'-linked ubiquitination of TGFBR1 which is critical to activate the pathway. Together with NGFR, negatively regulates NF-kappa-B and JNK-related signaling pathways. Promotes the proteasome-mediated degradation of PNPLA3, a protein involveld in lipid metabolism. The polypeptide is Bifunctional apoptosis regulator (Bfar) (Rattus norvegicus (Rat)).